We begin with the raw amino-acid sequence, 295 residues long: Acetyl-coenzyme A carboxylase carboxyl transferase subunit beta (295 aa).

The tract at residues 1-20 (MSWLSKLMPSGIRTENTPAK) is disordered. Positions 28-295 (LWEKCSNCGS…QPHPQDADAA (268 aa)) constitute a CoA carboxyltransferase N-terminal domain. Zn(2+)-binding residues include Cys32, Cys35, Cys51, and Cys54. A C4-type zinc finger spans residues 32–54 (CSNCGSALYGPELEENLEVCPKC).

It belongs to the AccD/PCCB family. As to quaternary structure, acetyl-CoA carboxylase is a heterohexamer composed of biotin carboxyl carrier protein (AccB), biotin carboxylase (AccC) and two subunits each of ACCase subunit alpha (AccA) and ACCase subunit beta (AccD). The cofactor is Zn(2+).

It localises to the cytoplasm. It carries out the reaction N(6)-carboxybiotinyl-L-lysyl-[protein] + acetyl-CoA = N(6)-biotinyl-L-lysyl-[protein] + malonyl-CoA. The protein operates within lipid metabolism; malonyl-CoA biosynthesis; malonyl-CoA from acetyl-CoA: step 1/1. Its function is as follows. Component of the acetyl coenzyme A carboxylase (ACC) complex. Biotin carboxylase (BC) catalyzes the carboxylation of biotin on its carrier protein (BCCP) and then the CO(2) group is transferred by the transcarboxylase to acetyl-CoA to form malonyl-CoA. In Xanthomonas euvesicatoria pv. vesicatoria (strain 85-10) (Xanthomonas campestris pv. vesicatoria), this protein is Acetyl-coenzyme A carboxylase carboxyl transferase subunit beta.